The sequence spans 522 residues: MTARPPESCVLAKDRPEEPVVPVVSPGPLVPVADFGPLDRLRGWIVTGLITLLATVTRFLNLGSLTDAGTPIFDEKHYAPQAWQVLNNHGVEDNPGYGLVVHPPVGKQLIAIGEAIFGYNGFGWRFTGALLGVVLVALVVRIVRRISRSTLVGAIAGVLLICDGVSFVTARTALLDGFLTFFVVAAFGALIVDRDQVRERMHIALLAGRSAATVWGPRVGVRWWRFGAGVLLGLACATKWSGVYFVLFFGAMALAFDVAARRQYQVQRPWLGTVRRDVLPSGYALGLIPFAVYLATYAPWFASETAIDRHAVGQAVGRNSVVPLPDAVRSLWHYTAKAFHFHAGLTNSAGNYHPWESKPWTWPMSLRPVLYAIDQQDVAGCGAQSCVKAEMLVGTPAMWWLAVPVLAYAGWRMFVRRDWRYAVVLVGYCAGWLPWFADIDRQMYFFYAATMAPFLVMGISLVLGDILYHPGQGSERRTLGLIVVCCYVALVVTNFAWLYPVLTGLPISQQTWNLEIWLPSWR.

The Cytoplasmic segment spans residues 1–42 (MTARPPESCVLAKDRPEEPVVPVVSPGPLVPVADFGPLDRLR). A helical membrane pass occupies residues 43-63 (GWIVTGLITLLATVTRFLNLG). Residues 64–119 (SLTDAGTPIFDEKHYAPQAWQVLNNHGVEDNPGYGLVVHPPVGKQLIAIGEAIFGY) lie on the Extracellular side of the membrane. A helical membrane pass occupies residues 120–140 (NGFGWRFTGALLGVVLVALVV). At 141-149 (RIVRRISRS) the chain is on the cytoplasmic side. Residues 150-170 (TLVGAIAGVLLICDGVSFVTA) traverse the membrane as a helical segment. Residue Arg171 is a topological domain, extracellular. Residues 172–192 (TALLDGFLTFFVVAAFGALIV) form a helical membrane-spanning segment. Topologically, residues 193 to 239 (DRDQVRERMHIALLAGRSAATVWGPRVGVRWWRFGAGVLLGLACATK) are cytoplasmic. Residues 240–260 (WSGVYFVLFFGAMALAFDVAA) form a helical membrane-spanning segment. The Extracellular segment spans residues 261 to 281 (RRQYQVQRPWLGTVRRDVLPS). The helical transmembrane segment at 282 to 302 (GYALGLIPFAVYLATYAPWFA) threads the bilayer. The Cytoplasmic portion of the chain corresponds to 303-390 (SETAIDRHAV…CGAQSCVKAE (88 aa)). The chain crosses the membrane as a helical span at residues 391–411 (MLVGTPAMWWLAVPVLAYAGW). Residues 412-418 (RMFVRRD) lie on the Extracellular side of the membrane. A helical transmembrane segment spans residues 419–439 (WRYAVVLVGYCAGWLPWFADI). Residues 440–442 (DRQ) are Cytoplasmic-facing. Residues 443–463 (MYFFYAATMAPFLVMGISLVL) form a helical membrane-spanning segment. The Extracellular segment spans residues 464 to 478 (GDILYHPGQGSERRT). Residues 479–499 (LGLIVVCCYVALVVTNFAWLY) traverse the membrane as a helical segment. Residues 500 to 522 (PVLTGLPISQQTWNLEIWLPSWR) lie on the Cytoplasmic side of the membrane.

It belongs to the glycosyltransferase 39 family.

The protein localises to the cell membrane. Its pathway is protein modification; protein glycosylation. Protein O-mannosyltransferase that catalyzes the transfer of a single mannose residue from a polyprenol phospho-mannosyl lipidic donor to the hydroxyl group of selected serine and threonine residues in acceptor proteins. This Mycobacterium tuberculosis (strain CDC 1551 / Oshkosh) protein is Polyprenol-phosphate-mannose--protein mannosyltransferase (pmt).